The following is a 144-amino-acid chain: MDYRESTGESQSKYKGIRRRKWGKWVSEIRVPGTRDRLWLGSFSTAEGAAVAHDVAFFCLHQPDSLESLNFPHLLNPSLVSRTSPRSIQQAASNAGMAIDAGIVHSTSVNSGCGDTTTYYENGADQVEPLNISVYDYLGGHDHV.

The AP2/ERF DNA-binding region spans 13–72 (KYKGIRRRKWGKWVSEIRVPGTRDRLWLGSFSTAEGAAVAHDVAFFCLHQPDSLESLNFP).

This sequence belongs to the AP2/ERF transcription factor family. ERF subfamily.

Its subcellular location is the nucleus. Its function is as follows. Probably acts as a transcriptional activator. Binds to the GCC-box pathogenesis-related promoter element. May be involved in the regulation of gene expression by stress factors and by components of stress signal transduction pathways. The polypeptide is Ethylene-responsive transcription factor ERF019 (ERF019) (Arabidopsis thaliana (Mouse-ear cress)).